Consider the following 322-residue polypeptide: Beta-1,4-galactosyltransferase 7 (322 aa).

Topologically, residues 1–9 (MVNISTINW) are cytoplasmic. Residues 10 to 30 (VFVCGLSFCLGGIAVLSLMPL) form a helical; Signal-anchor for type II membrane protein membrane-spanning segment. The Lumenal segment spans residues 31-322 (GSDCVCPLSN…TAAAASAVQT (292 aa)). Positions 82, 84, 145, and 146 each coordinate UDP-alpha-D-galactose. Asp147 is a Mn(2+) binding site. 4 residues coordinate UDP-alpha-D-galactose: Tyr177, Gly185, Trp207, and Gly208. Position 209 (Leu209) interacts with beta-D-xylose. Glu210 provides a ligand contact to UDP-alpha-D-galactose. Beta-D-xylose-binding residues include Asp211 and Asp212. An N-linked (GlcNAc...) asparagine glycan is attached at Asn236. UDP-alpha-D-galactose is bound by residues His241, His243, and Arg250. 2 residues coordinate Mn(2+): His241 and His243. Cystine bridges form between Cys255-Cys310 and Cys300-Cys308.

The protein belongs to the glycosyltransferase 7 family. It depends on Mn(2+) as a cofactor. As to expression, expressed in male and female adults. Expressed in head.

The protein resides in the golgi apparatus membrane. It catalyses the reaction 3-O-(beta-D-xylosyl)-L-seryl-[protein] + UDP-alpha-D-galactose = 3-O-(beta-D-galactosyl-(1-&gt;4)-beta-D-xylosyl)-L-seryl-[protein] + UDP + H(+). It functions in the pathway protein modification; protein glycosylation. Transfers galactose from UDP-D-Galactose (UDP-Gal) to the acceptor xylose residue in the linkage tetrasaccharide region of the glycosaminoglycan side chain of proteoglycans. No activity towards beta-GlcNAc, beta-Glc, beta-Gal, and beta-GalNAc as acceptors. This is Beta-1,4-galactosyltransferase 7 from Drosophila melanogaster (Fruit fly).